Reading from the N-terminus, the 452-residue chain is Glycine receptor subunit alpha-2 (452 aa).

The N-terminal stretch at 1 to 27 (MNRQLVNILTALFAFFLETNHFRTAFC) is a signal peptide. The Extracellular portion of the chain corresponds to 28–256 (KDHDSRSGKQ…KFHLERQMGY (229 aa)). The N-linked (GlcNAc...) asparagine glycan is linked to Asn72. Residue Arg99 participates in glycine binding. Arg99 lines the strychnine pocket. Asn103 carries N-linked (GlcNAc...) asparagine glycosylation. Residue Ser163 coordinates glycine. Cys172 and Cys186 are disulfide-bonded. Residues Glu226 and Glu228 each contribute to the Zn(2+) site. An intrachain disulfide couples Cys232 to Cys243. Residue Thr238 coordinates glycine. Zn(2+) is bound at residue His249. The chain crosses the membrane as a helical span at residues 257–278 (YLIQMYIPSLLIVILSWVSFWI). Residues 279–283 (NMDAA) are Cytoplasmic-facing. A helical transmembrane segment spans residues 284 to 304 (PARVALGITTVLTMTTQSSGS). Topologically, residues 305–315 (RASLPKVSYVK) are extracellular. The helical transmembrane segment at 316–336 (AIDIWMAVCLLFVFAALLEYA) threads the bilayer. Residues 337–420 (AVNFVSRQHK…FVDRAKRIDT (84 aa)) are Cytoplasmic-facing. Residues 421-441 (ISRAAFPLAFLIFNIFYWITY) traverse the membrane as a helical segment. Residues 442–452 (KIIRHEDVHKK) lie on the Extracellular side of the membrane.

The protein belongs to the ligand-gated ion channel (TC 1.A.9) family. Glycine receptor (TC 1.A.9.3) subfamily. GLRA2 sub-subfamily. In terms of assembly, interacts with GLRB. Heteropentamer composed of GLRA2 and GLRB. Functional GLRB-GLRA2 heteropentamers contain four GLRA2 subunits and one GLRB subunit, although alternative subunit composition cannot be excluded. Homopentamer (in vitro). Both homopentamers and heteropentamers form functional ion channels, but their characteristics are subtly different.

The protein localises to the postsynaptic cell membrane. The protein resides in the synapse. Its subcellular location is the cell membrane. It is found in the cell projection. The catalysed reaction is chloride(in) = chloride(out). With respect to regulation, channel opening is triggered by extracellular glycine. Channel opening is also triggered by taurine and beta-alanine. Inhibited by strychnine. Inhibited by picrotoxin. Channel activity is potentiated by 10-100 uM Zn(2+). Channel activity is marginally increased by 50 mM ethanol; it is strongly increased by a combination of 0.5 uM Zn(2+) and 50 mM ethanol. Channel activity is inhibited by 100-1000 uM Zn(2+). Functionally, subunit of heteromeric glycine-gated chloride channels. Plays a role in synaptic plasticity. Contributes to the generation of inhibitory postsynaptic currents, and is involved in the down-regulation of neuronal excitability. Plays a role in cellular responses to ethanol. The protein is Glycine receptor subunit alpha-2 of Homo sapiens (Human).